Consider the following 50-residue polypeptide: uncharacterized protein (50 aa).

This is an uncharacterized protein from Dryophytes versicolor (chameleon treefrog).